The sequence spans 347 residues: Ferredoxin--NADP reductase 1 (347 aa).

Positions 26, 45, 53, 58, 98, 133, 298, and 339 each coordinate FAD.

This sequence belongs to the ferredoxin--NADP reductase type 2 family. In terms of assembly, homodimer. FAD is required as a cofactor.

The enzyme catalyses 2 reduced [2Fe-2S]-[ferredoxin] + NADP(+) + H(+) = 2 oxidized [2Fe-2S]-[ferredoxin] + NADPH. The sequence is that of Ferredoxin--NADP reductase 1 from Chloroherpeton thalassium (strain ATCC 35110 / GB-78).